The sequence spans 285 residues: Glutamate racemase (285 aa).

Substrate is bound by residues 28 to 29 (DS) and 60 to 61 (YG). Cys-92 (proton donor/acceptor) is an active-site residue. 93-94 (NT) is a binding site for substrate. The active-site Proton donor/acceptor is the Cys-204. 205–206 (TH) provides a ligand contact to substrate.

This sequence belongs to the aspartate/glutamate racemases family.

The catalysed reaction is L-glutamate = D-glutamate. Its pathway is cell wall biogenesis; peptidoglycan biosynthesis. In terms of biological role, provides the (R)-glutamate required for cell wall biosynthesis. This Escherichia coli O6:H1 (strain CFT073 / ATCC 700928 / UPEC) protein is Glutamate racemase.